The chain runs to 806 residues: Zygotic DNA replication licensing factor mcm3 (806 aa).

The region spanning 295-502 (VFEQLSRSLA…HDREISDHVL (208 aa)) is the MCM domain. 345–352 (GDPSVAKS) is an ATP binding site. Residues 477–480 (SRFD) carry the Arginine finger motif. The segment at 662–738 (KKRRRREGES…TDSSAKPGLS (77 aa)) is disordered. A compositionally biased stretch (basic and acidic residues) spans 693 to 702 (AQDGESHDPY).

The protein belongs to the MCM family. Component of the mcm2-7 complex (RLF-M). The complex forms a toroidal hexameric ring with the proposed subunit order mcm2-mcm6-mcm4-mcm7-mcm3-mcm5. Begins to associate with zmcm6 into mcm complexes at the neurula stage. Component of the CMG helicase complex, composed of the mcm2-7 complex, the GINS complex and cdc45.

The protein resides in the nucleus. The protein localises to the chromosome. It carries out the reaction ATP + H2O = ADP + phosphate + H(+). In terms of biological role, acts as a component of the mcm2-7 complex (mcm complex) which is the putative replicative helicase essential for 'once per cell cycle' DNA replication initiation and elongation in eukaryotic cells. The active ATPase sites in the mcm2-7 ring are formed through the interaction surfaces of two neighboring subunits such that a critical structure of a conserved arginine finger motif is provided in trans relative to the ATP-binding site of the Walker A box of the adjacent subunit. The six ATPase active sites, however, are likely to contribute differentially to the complex helicase activity. The existence of maternal and zygotic forms of mcm3 and mcm6 suggests that specific forms of mcm2-7 complexes may be used during different stages of development. The protein is Zygotic DNA replication licensing factor mcm3 of Xenopus laevis (African clawed frog).